The primary structure comprises 576 residues: Glucose-6-phosphate 1-dehydrogenase 1, chloroplastic (576 aa).

A chloroplast-targeting transit peptide spans 1 to 50 (MATHSMIIPSPSSSSSSLATAASPFKETLPLFSRSLTFPRKSLFSQVRLR). Residues 97–104 (GASGDLAK) and arginine 131 contribute to the NADP(+) site. The cysteines at positions 149 and 157 are disulfide-linked. NADP(+) is bound at residue lysine 234. Residues lysine 234, 264–268 (HYLGK), glutamate 302, and aspartate 321 each bind D-glucose 6-phosphate. Histidine 326 acts as the Proton acceptor in catalysis. Lysine 419 lines the NADP(+) pocket. D-glucose 6-phosphate is bound by residues lysine 422 and arginine 427. NADP(+) is bound by residues arginine 432 and arginine 461. Glutamine 463 contacts D-glucose 6-phosphate. NADP(+)-binding positions include 469-471 (YLR) and arginine 554.

Belongs to the glucose-6-phosphate dehydrogenase family. As to quaternary structure, forms homodimer. Interacts with G6PD2, G6PD3 and G6PD4. Expressed in leaves, stems, buds, flowers and siliques.

The protein localises to the plastid. It localises to the chloroplast stroma. The protein resides in the peroxisome. It catalyses the reaction D-glucose 6-phosphate + NADP(+) = 6-phospho-D-glucono-1,5-lactone + NADPH + H(+). It functions in the pathway carbohydrate degradation; pentose phosphate pathway; D-ribulose 5-phosphate from D-glucose 6-phosphate (oxidative stage): step 1/3. With respect to regulation, regulated by metabolites. Post-translationally inactivated by cysteine-mediated redox modification via the ferredoxin-thioredoxin system in the light and this avoids futile cycles with photosynthetic CO2 fixation. In terms of biological role, catalyzes the rate-limiting step of the oxidative pentose-phosphate pathway, which represents a route for the dissimilation of carbohydrates besides glycolysis. The main function of this enzyme is to provide reducing power (NADPH) and pentose phosphates for fatty acid and nucleic acid synthesis which are involved in membrane synthesis and cell division. This chain is Glucose-6-phosphate 1-dehydrogenase 1, chloroplastic, found in Arabidopsis thaliana (Mouse-ear cress).